The following is a 436-amino-acid chain: 3-ketoacyl-CoA thiolase (436 aa).

The Acyl-thioester intermediate role is filled by Cys99. Active-site proton acceptor residues include His392 and Cys422.

This sequence belongs to the thiolase-like superfamily. Thiolase family. Heterotetramer of two alpha chains (FadJ) and two beta chains (FadI).

It localises to the cytoplasm. It carries out the reaction an acyl-CoA + acetyl-CoA = a 3-oxoacyl-CoA + CoA. Its pathway is lipid metabolism; fatty acid beta-oxidation. In terms of biological role, catalyzes the final step of fatty acid oxidation in which acetyl-CoA is released and the CoA ester of a fatty acid two carbons shorter is formed. In Shewanella denitrificans (strain OS217 / ATCC BAA-1090 / DSM 15013), this protein is 3-ketoacyl-CoA thiolase.